The chain runs to 248 residues: Type III pantothenate kinase (248 aa).

Position 6–13 (6–13 (DCGNSLIK)) interacts with ATP. Substrate contacts are provided by residues Tyr-92 and 99–102 (GLDR). The Proton acceptor role is filled by Asp-101. Position 121 (Asp-121) interacts with K(+). Thr-124 serves as a coordination point for ATP. Thr-180 provides a ligand contact to substrate.

Belongs to the type III pantothenate kinase family. Homodimer. The cofactor is NH4(+). K(+) is required as a cofactor.

It localises to the cytoplasm. The enzyme catalyses (R)-pantothenate + ATP = (R)-4'-phosphopantothenate + ADP + H(+). It functions in the pathway cofactor biosynthesis; coenzyme A biosynthesis; CoA from (R)-pantothenate: step 1/5. Catalyzes the phosphorylation of pantothenate (Pan), the first step in CoA biosynthesis. In Pseudomonas aeruginosa (strain LESB58), this protein is Type III pantothenate kinase.